Reading from the N-terminus, the 75-residue chain is Defense protein 6 (75 aa).

The signal sequence occupies residues 1-20 (MKTCLVFAFFLVAVFAAVQA). A propeptide spanning residues 21–32 (EENDSPQTLPRR) is cleaved from the precursor. Intrachain disulfides connect C44–C63, C49–C68, and C53–C70.

Belongs to the invertebrate defensin family.

It is found in the secreted. Functionally, has antibacterial activity. This is Defense protein 6 from Lonomia obliqua (Moth).